The sequence spans 755 residues: Sentrin-specific protease 5 (755 aa).

Positions 269–329 are disordered; sequence QKVTGDHQET…NSHVPDGHTK (61 aa). Residues 272–283 are compositionally biased toward basic and acidic residues; it reads TGDHQETLRENG. Residues 563–724 form a protease region; that stretch reads FYNKHMLDMD…VFVLQYCKCL (162 aa). Catalysis depends on residues His646, Asp663, and Cys713.

It belongs to the peptidase C48 family. As to quaternary structure, interacts with CCAR2.

The protein localises to the nucleus. It localises to the nucleolus. Functionally, protease that catalyzes two essential functions in the SUMO pathway: processing of full-length SUMO3 to its mature form and deconjugation of SUMO2 and SUMO3 from targeted proteins. Has weak proteolytic activity against full-length SUMO1 or SUMO1 conjugates. Required for cell division. The chain is Sentrin-specific protease 5 (SENP5) from Macaca fascicularis (Crab-eating macaque).